The primary structure comprises 458 residues: Acyl-CoA-binding domain-containing protein 5 (458 aa).

Residues 8 to 97 (HQTRFEAAVS…MKKILETMPV (90 aa)) enclose the ACB domain. An acyl-CoA contacts are provided by residues 19–28 (IQSLPKNGSF), 39–43 (YSFYK), lysine 65, and tyrosine 84. Disordered stretches follow at residues 119–248 (KHGR…REED) and 296–369 (TETS…GPNG). Positions 125–139 (GVTSELGSVLTSTPN) are enriched in polar residues. Residues 154-188 (AESDEEQAATKEVREEDEEEESEHSEQEDKDVEQQ) adopt a coiled-coil conformation. Basic and acidic residues-rich tracts occupy residues 177–195 (HSEQEDKDVEQQPGHEKPA), 303–313 (ELKDGGEDGKQ), and 322–338 (TWSEKSEHFGSRRERPS). The span at 343 to 356 (GGDGSRSGQIGSGG) shows a compositional bias: gly residues. Residues 373–402 (EQIAVVLMRLQEDMQNVLQRLHSLEVQTAS) adopt a coiled-coil conformation. Residues 430–450 (GTLALAVVWPFVVHWLMHVFL) traverse the membrane as a helical segment.

This sequence belongs to the ATG37 family.

It localises to the peroxisome membrane. Its function is as follows. Acyl-CoA binding protein which acts as the peroxisome receptor for pexophagy but is dispensable for aggrephagy and nonselective autophagy. Binds medium- and long-chain acyl-CoA esters. This chain is Acyl-CoA-binding domain-containing protein 5 (acbd5), found in Xenopus tropicalis (Western clawed frog).